A 591-amino-acid polypeptide reads, in one-letter code: Aspartate--tRNA(Asp/Asn) ligase (591 aa).

Residue glutamate 176 coordinates L-aspartate. The segment at 200–203 (QLFK) is aspartate. Position 222 (arginine 222) interacts with L-aspartate. Residues 222-224 (RDE) and glutamine 231 each bind ATP. Histidine 450 provides a ligand contact to L-aspartate. Glutamate 484 is a binding site for ATP. Position 491 (arginine 491) interacts with L-aspartate. Position 536 to 539 (536 to 539 (GLDR)) interacts with ATP.

Belongs to the class-II aminoacyl-tRNA synthetase family. Type 1 subfamily. In terms of assembly, homodimer.

Its subcellular location is the cytoplasm. The enzyme catalyses tRNA(Asx) + L-aspartate + ATP = L-aspartyl-tRNA(Asx) + AMP + diphosphate. Its function is as follows. Aspartyl-tRNA synthetase with relaxed tRNA specificity since it is able to aspartylate not only its cognate tRNA(Asp) but also tRNA(Asn). Reaction proceeds in two steps: L-aspartate is first activated by ATP to form Asp-AMP and then transferred to the acceptor end of tRNA(Asp/Asn). The sequence is that of Aspartate--tRNA(Asp/Asn) ligase from Bacillus cereus (strain AH187).